We begin with the raw amino-acid sequence, 558 residues long: Acylase ACY 1 proenzyme (558 aa).

Threonine 368 functions as the Nucleophile in the catalytic mechanism.

This sequence belongs to the gamma-glutamyltransferase family. In terms of assembly, dimer of two non-identical chains processed from the same precursor.

It catalyses the reaction (7R)-7-(4-carboxybutanamido)cephalosporanate + H2O = (7R)-7-aminocephalosporanate + glutarate. The catalysed reaction is an N-terminal (5-L-glutamyl)-[peptide] + an alpha-amino acid = 5-L-glutamyl amino acid + an N-terminal L-alpha-aminoacyl-[peptide]. The enzyme catalyses glutathione + H2O = L-cysteinylglycine + L-glutamate. It carries out the reaction an S-substituted glutathione + H2O = an S-substituted L-cysteinylglycine + L-glutamate. In terms of biological role, besides the cephalosporin acylase I activity which converts GL-7ACA into 7-ACA; this enzyme displays some gamma glutamyltranspeptidase activity. In Pseudomonas sp. (strain V22), this protein is Acylase ACY 1 proenzyme (acyI).